Here is a 289-residue protein sequence, read N- to C-terminus: Glucosamine-6-phosphate deaminase 1 (289 aa).

Lys-64 carries the post-translational modification N6-acetyllysine. Asp-72 serves as the catalytic Proton acceptor; for enolization step. Asp-141 (for ring-opening step) is an active-site residue. His-143 (proton acceptor; for ring-opening step) is an active-site residue. Glu-148 functions as the For ring-opening step in the catalytic mechanism. Thr-161 is subject to Phosphothreonine.

The protein belongs to the glucosamine/galactosamine-6-phosphate isomerase family. In terms of assembly, homohexamer. In terms of tissue distribution, at the equatorial segment of the sperm head.

It localises to the cytoplasm. It carries out the reaction alpha-D-glucosamine 6-phosphate + H2O = beta-D-fructose 6-phosphate + NH4(+). It participates in nucleotide-sugar biosynthesis; UDP-N-acetyl-alpha-D-glucosamine biosynthesis; alpha-D-glucosamine 6-phosphate from D-fructose 6-phosphate: step 1/1. With respect to regulation, allosterically activated by N-acetylglucosamine-6-phosphate (GlcNAc6P). Its function is as follows. Catalyzes the reversible conversion of alpha-D-glucosamine 6-phosphate (GlcN-6P) into beta-D-fructose 6-phosphate (Fru-6P) and ammonium ion, a regulatory reaction step in de novo uridine diphosphate-N-acetyl-alpha-D-glucosamine (UDP-GlcNAc) biosynthesis via hexosamine pathway. Deamination is coupled to aldo-keto isomerization mediating the metabolic flux from UDP-GlcNAc toward Fru-6P. At high ammonium level can drive amination and isomerization of Fru-6P toward hexosamines and UDP-GlcNAc synthesis. Has a role in fine tuning the metabolic fluctuations of cytosolic UDP-GlcNAc and their effects on hyaluronan synthesis that occur during tissue remodeling. Seems to trigger calcium oscillations in mammalian eggs. These oscillations serve as the essential trigger for egg activation and early development of the embryo. This Mesocricetus auratus (Golden hamster) protein is Glucosamine-6-phosphate deaminase 1.